We begin with the raw amino-acid sequence, 55 residues long: uncharacterized protein (55 aa).

Residues 27-47 (IFLIYHFSPIYCPYLFLFTVF) traverse the membrane as a helical segment.

The protein resides in the membrane. This is an uncharacterized protein from Acheta domesticus (House cricket).